The sequence spans 892 residues: DNA mismatch repair protein MutS (892 aa).

607–614 (GPNMSGKS) serves as a coordination point for ATP. Positions 833–854 (EESQLSFFGGEQSPKKQDKPVL) are disordered. A compositionally biased stretch (basic and acidic residues) spans 845–854 (SPKKQDKPVL).

The protein belongs to the DNA mismatch repair MutS family.

This protein is involved in the repair of mismatches in DNA. It is possible that it carries out the mismatch recognition step. This protein has a weak ATPase activity. The polypeptide is DNA mismatch repair protein MutS (Bacillus cereus (strain Q1)).